The chain runs to 289 residues: Phospholipase C (289 aa).

The signal sequence occupies residues methionine 1–alanine 25. A propeptide spanning residues asparagine 26–serine 51 is cleaved from the precursor. Zn(2+) is bound by residues tryptophan 52, histidine 65, aspartate 106, histidine 120, histidine 169, aspartate 173, histidine 179, histidine 193, and glutamate 197. The Zn-dependent PLC domain occupies tryptophan 52–glutamate 289.

It belongs to the bacterial zinc-metallophospholipase C family. In terms of assembly, forms monomers, dimers and higher order oligomers, but only the monomer is enzymatically active. Requires Zn(2+) as cofactor.

The protein localises to the secreted. It catalyses the reaction a 1,2-diacyl-sn-glycero-3-phosphocholine + H2O = phosphocholine + a 1,2-diacyl-sn-glycerol + H(+). The enzyme catalyses 1,2-dihexadecanoyl-sn-glycero-3-phosphocholine + H2O = 1,2-dihexadecanoyl-sn-glycerol + phosphocholine + H(+). It carries out the reaction 1-hexadecanoyl-2-(9Z-octadecenoyl)-sn-glycero-3-phosphocholine + H2O = 1-hexadecanoyl-2-(9Z-octadecenoyl)-sn-glycerol + phosphocholine + H(+). The catalysed reaction is 1,2-di-(9Z-octadecenoyl)-sn-glycero-3-phosphocholine + H2O = 1,2-di-(9Z-octadecenoyl)-sn-glycerol + phosphocholine + H(+). It catalyses the reaction a 1,2-diacyl-sn-glycero-3-phosphoethanolamine + H2O = phosphoethanolamine + a 1,2-diacyl-sn-glycerol + H(+). The enzyme catalyses 1,2-di-(9Z-octadecenoyl)-sn-glycero-3-phosphoethanolamine + H2O = phosphoethanolamine + 1,2-di-(9Z-octadecenoyl)-sn-glycerol + H(+). It carries out the reaction 1,2-dihexadecanoyl-sn-glycero-3-phosphoethanolamine + H2O = 1,2-dihexadecanoyl-sn-glycerol + phosphoethanolamine + H(+). The catalysed reaction is a 1,2-diacyl-sn-glycero-3-phospho-L-serine + H2O = O-phospho-L-serine + a 1,2-diacyl-sn-glycerol + H(+). It catalyses the reaction a 1,2-diacyl-sn-glycero-3-phosphoglycerol + H2O = glycerol 1-phosphate + a 1,2-diacyl-sn-glycerol + H(+). The enzyme catalyses a 1,2-diacyl-sn-glycero-3-phospho-(1D-myo-inositol) + H2O = 1D-myo-inositol 1-phosphate + a 1,2-diacyl-sn-glycerol + H(+). It carries out the reaction a sphingomyelin + H2O = phosphocholine + an N-acylsphing-4-enine + H(+). The catalysed reaction is a 1-O-(1Z-alkenyl)-2-acyl-sn-glycero-3-phosphoethanolamine + H2O = a 1-O-(1Z-alkenyl)-2-acyl-sn-glycerol + phosphoethanolamine + H(+). Enzymatic activity of LmPC-PLC can be specifically inhibited by its propeptide added in trans. The tendency of the enzyme to oligomerize, which appears to largely attenuate the enzymatic activity, may be one of the mechanisms regulating phospholipase activity in the host cell during the different steps of the infection cycle of L.monocytogenes. Enzyme activity is inhibited by EDTA and o-phenanthroline in vitro. Major virulence factor whose phospholipase activity facilitates pore formation by the pore-forming toxin listeriolysin O (LLO), leading to vacuolar membrane disruption and vacuolar escape of L.monocytogenes, which enables the bacterium to spread in the host. Acts as a phospholipase C exhibiting broad substrate specificity, with the highest activities towards diacylglycerophospholipids with phosphocholine, phosphoserine, and phosphoethanolamine head groups, but less towards phosphoglycerol or phosphoinositol head groups. Is also able to hydrolyze sphingomyelin and plasmenylethanolamine. The polypeptide is Phospholipase C (Listeria monocytogenes serovar 1/2a (strain ATCC BAA-679 / EGD-e)).